We begin with the raw amino-acid sequence, 134 residues long: MRPGVAAVAAVRIFDAAKAPIQWEERNVTAIQGPGGKWMIPPEAKGPLKTPIAAGHPSMNLLLRKTFDLYANVRPCVSIEGYKTPYTDVNIVTIRRIAEFAFEYARDMANPTALLLSAVMMLRCSDFTEEICRR.

The residue at position 37 (Lys-37) is an N6-succinyllysine. Thr-50 bears the Phosphothreonine mark. 3 residues coordinate substrate: Arg-64, Arg-74, and Arg-95.

The protein belongs to the isocitrate and isopropylmalate dehydrogenases family. In terms of assembly, heterooligomer of subunits alpha (IDH3A), beta (IDH3B), and gamma (IDH3G) in the apparent ratio of 2:1:1. The heterodimer containing one IDH3A and one IDH3B subunit and the heterodimer containing one IDH3A and one IDH3G subunit assemble into a heterotetramer (which contains two subunits of IDH3A, one of IDH3B and one of IDH3G) and further into the heterooctamer. Requires Mg(2+) as cofactor. It depends on Mn(2+) as a cofactor.

The protein localises to the mitochondrion. It carries out the reaction D-threo-isocitrate + NAD(+) = 2-oxoglutarate + CO2 + NADH. The heterotetramer and the heterodimer composed of IDH3A and IDH3G subunits can be allosterically activated by citrate (CIT) or/and ADP, and the two activators can act independently or synergistically. The heterodimer composed of IDH3A and IDH3B subunits cannot be allosterically regulated and the allosteric regulation of the heterotetramer is through the IDH3G subunit and not the IDH3B subunit. The IDH3G subunit contains the allosteric site which consists of a CIT-binding site and an ADP-binding site, and the binding of CIT and ADP causes conformational changes at the allosteric site which are transmitted to the active site in the catalytic subunit (IDH3A) through a cascade of conformational changes at the heterodimer interface, leading to stabilization of the isocitrate-binding at the active site and thus activation of the enzyme. ATP can activate the heterotetramer and the heterodimer composed of IDH3A and IDH3G subunits at low concentrations but inhibits their activities at high concentrations, whereas ATP exhibits only inhibitory effect on the heterodimer composed of IDH3A and IDH3B subunits. In terms of biological role, catalytic subunit of the enzyme which catalyzes the decarboxylation of isocitrate (ICT) into alpha-ketoglutarate. The heterodimer composed of the alpha (IDH3A) and beta (IDH3B) subunits and the heterodimer composed of the alpha (IDH3A) and gamma (IDH3G) subunits, have considerable basal activity but the full activity of the heterotetramer (containing two subunits of IDH3A, one of IDH3B and one of IDH3G) requires the assembly and cooperative function of both heterodimers. This Mesocricetus auratus (Golden hamster) protein is Isocitrate dehydrogenase [NAD] subunit alpha, mitochondrial.